The following is a 500-amino-acid chain: Probable cytosol aminopeptidase (500 aa).

Mn(2+) is bound by residues K264 and D269. K276 is an active-site residue. 3 residues coordinate Mn(2+): D287, D346, and E348. The active site involves R350.

It belongs to the peptidase M17 family. It depends on Mn(2+) as a cofactor.

It localises to the cytoplasm. The enzyme catalyses Release of an N-terminal amino acid, Xaa-|-Yaa-, in which Xaa is preferably Leu, but may be other amino acids including Pro although not Arg or Lys, and Yaa may be Pro. Amino acid amides and methyl esters are also readily hydrolyzed, but rates on arylamides are exceedingly low.. It carries out the reaction Release of an N-terminal amino acid, preferentially leucine, but not glutamic or aspartic acids.. Its function is as follows. Presumably involved in the processing and regular turnover of intracellular proteins. Catalyzes the removal of unsubstituted N-terminal amino acids from various peptides. This chain is Probable cytosol aminopeptidase, found in Rhodopseudomonas palustris (strain ATCC BAA-98 / CGA009).